The chain runs to 182 residues: ATP-dependent protease subunit HslV (182 aa).

Residue threonine 6 is part of the active site. Na(+) contacts are provided by alanine 164, cysteine 167, and threonine 170.

This sequence belongs to the peptidase T1B family. HslV subfamily. As to quaternary structure, a double ring-shaped homohexamer of HslV is capped on each side by a ring-shaped HslU homohexamer. The assembly of the HslU/HslV complex is dependent on binding of ATP.

It is found in the cytoplasm. It carries out the reaction ATP-dependent cleavage of peptide bonds with broad specificity.. Allosterically activated by HslU binding. Protease subunit of a proteasome-like degradation complex believed to be a general protein degrading machinery. The protein is ATP-dependent protease subunit HslV of Borreliella afzelii (strain PKo) (Borrelia afzelii).